Reading from the N-terminus, the 32-residue chain is U5-ctenitoxin-Pn1a (32 aa).

Intrachain disulfides connect Cys-3-Cys-16, Cys-9-Cys-21, and Cys-15-Cys-30.

Expressed by the venom gland.

The protein localises to the secreted. In terms of biological role, blocks voltage-gated sodium channels (Nav). Causes tail erection, scratching and a reduction in mobility at a dose level of 1.40 mg/mouse. In Phoneutria nigriventer (Brazilian armed spider), this protein is U5-ctenitoxin-Pn1a.